We begin with the raw amino-acid sequence, 186 residues long: Putative 3-methyladenine DNA glycosylase (186 aa).

It belongs to the DNA glycosylase MPG family.

In Borreliella afzelii (strain PKo) (Borrelia afzelii), this protein is Putative 3-methyladenine DNA glycosylase.